We begin with the raw amino-acid sequence, 200 residues long: Recombination protein RecR (200 aa).

The C4-type zinc finger occupies cysteine 57–cysteine 72. In terms of domain architecture, Toprim spans threonine 80 to proline 175.

The protein belongs to the RecR family.

Functionally, may play a role in DNA repair. It seems to be involved in an RecBC-independent recombinational process of DNA repair. It may act with RecF and RecO. This is Recombination protein RecR from Pseudomonas putida (strain GB-1).